A 208-amino-acid chain; its full sequence is Glutathione S-transferase 1-1 (208 aa).

Residues 1-80 form the GST N-terminal domain; that stretch reads MDFYYLPGSA…YLVEKYGKND (80 aa). Residues Ser9, 50 to 52, and 64 to 66 contribute to the glutathione site; these read HTI and ESR. A GST C-terminal domain is found at 86–207; the sequence is CPKKRAVINQ…EGCLEFKKFF (122 aa).

It belongs to the GST superfamily. Theta family. Homodimer.

It catalyses the reaction RX + glutathione = an S-substituted glutathione + a halide anion + H(+). Conjugation of reduced glutathione to a wide number of exogenous and endogenous hydrophobic electrophiles. This chain is Glutathione S-transferase 1-1 (GST1), found in Lucilia cuprina (Green bottle fly).